The sequence spans 411 residues: Mitogen-activated protein kinase 8 (411 aa).

Residues 26 to 321 (YQNLKPIGSG…VDEALQHPYI (296 aa)) form the Protein kinase domain. ATP-binding positions include 32 to 40 (IGSGAQGIV) and Lys55. At Cys116 the chain carries S-nitrosocysteine; in inhibited form. The Proton acceptor role is filled by Asp151. Thr183 carries the post-translational modification Phosphothreonine; by MAP2K7. A TXY motif is present at residues 183 to 185 (TPY). At Tyr185 the chain carries Phosphotyrosine; by MAP2K4. Residues 368–411 (KNGVIRGQPSPLGAAVINGSQHPVSSPSVNDMSSMSTDPTLASD) form a disordered region. Position 377 is a phosphoserine (Ser377). A compositionally biased stretch (low complexity) spans 390 to 403 (PVSSPSVNDMSSMS).

The protein belongs to the protein kinase superfamily. CMGC Ser/Thr protein kinase family. MAP kinase subfamily. As to quaternary structure, forms a complex with MAPK8IP1 and ARHGEF28. Found in a complex with SH3RF1, RAC1, MAP3K11/MLK3, MAP2K7/MKK7 and MAPK8IP1/JIP1. Found in a complex with SH3RF1, RAC2, MAP3K7/TAK1, MAP2K7/MKK7, MAPK8IP1/JIP1 and MAPK9/JNK2. Binds to at least four scaffolding proteins, MAPK8IP1/JIP-1, MAPK8IP2/JIP-2, MAPK8IP3/JIP-3/JSAP1 and SPAG9/MAPK8IP4/JIP-4. These proteins also bind other components of the JNK signaling pathway. Interacts with TP53, WWOX. Interacts with JAMP. Interacts with NFATC4. Interacts (phosphorylated form) with NFE2; the interaction phosphorylates NFE2 in undifferentiated cells. Interacts with MECOM; regulates JNK signaling. Interacts with PIN1; this interaction mediates MAPK8 conformational changes leading to the binding of MAPK8 to its substrates. Interacts with HSF1 (via D domain and preferentially with hyperphosphorylated form); this interaction occurs under both normal growth conditions and immediately upon heat shock. Interacts with STMN2, STMN3 and STMN4. Interacts with GRIPAP1. Interacts with POU5F1; phosphorylates POU5F1 at 'Ser-347'. Interacts with HSF4. The cofactor is Mg(2+). In terms of processing, dually phosphorylated on Thr-183 and Tyr-185 by MAP2K7 and MAP2K4, which activates the enzyme. Phosphorylated by TAOK2. Phosphorylated form is more concentrated at synapses than none-phosphorylated. Nitrosylated upon IFN-gamma-induced endogenous NO production, which inhibits the enzyme. May be phosphorylated at Thr-183 and Tyr-185 by MAP3K1/MEKK1.

Its subcellular location is the cytoplasm. It is found in the nucleus. The protein localises to the synapse. The catalysed reaction is L-seryl-[protein] + ATP = O-phospho-L-seryl-[protein] + ADP + H(+). It carries out the reaction L-threonyl-[protein] + ATP = O-phospho-L-threonyl-[protein] + ADP + H(+). With respect to regulation, activated by threonine and tyrosine phosphorylation by either of two dual specificity kinases, MAP2K4 and MAP2K7. MAP2K4 shows a strong preference for Tyr-185 while MAP2K7 phosphorylates Tyr-183 preferentially. Inhibited by dual specificity phosphatases, such as DUSP1. Inhibited by SERPINB3. Inhibited by IFN-gamma-induced S-nitrosylation. In terms of biological role, serine/threonine-protein kinase involved in various processes such as cell proliferation, differentiation, migration, transformation and programmed cell death. Extracellular stimuli such as pro-inflammatory cytokines or physical stress stimulate the stress-activated protein kinase/c-Jun N-terminal kinase (SAP/JNK) signaling pathway. In this cascade, two dual specificity kinases MAP2K4/MKK4 and MAP2K7/MKK7 phosphorylate and activate MAPK8/JNK1. In turn, MAPK8/JNK1 phosphorylates a number of transcription factors, primarily components of AP-1 such as JUN, JDP2 and ATF2 and thus regulates AP-1 transcriptional activity. Phosphorylates the replication licensing factor CDT1, inhibiting the interaction between CDT1 and the histone H4 acetylase HBO1 to replication origins. Loss of this interaction abrogates the acetylation required for replication initiation. Promotes stressed cell apoptosis by phosphorylating key regulatory factors including p53/TP53 and Yes-associates protein YAP1. In T-cells, MAPK8 and MAPK9 are required for polarized differentiation of T-helper cells into Th1 cells. Contributes to the survival of erythroid cells by phosphorylating the antagonist of cell death BAD upon EPO stimulation. Mediates starvation-induced BCL2 phosphorylation, BCL2 dissociation from BECN1, and thus activation of autophagy. Phosphorylates STMN2 and hence regulates microtubule dynamics, controlling neurite elongation in cortical neurons. In the developing brain, through its cytoplasmic activity on STMN2, negatively regulates the rate of exit from multipolar stage and of radial migration from the ventricular zone. Phosphorylates several other substrates including heat shock factor protein 4 (HSF4), the deacetylase SIRT1, ELK1, or the E3 ligase ITCH. Phosphorylates the CLOCK-BMAL1 heterodimer and plays a role in the regulation of the circadian clock. Phosphorylates the heat shock transcription factor HSF1, suppressing HSF1-induced transcriptional activity. Phosphorylates POU5F1, which results in the inhibition of POU5F1's transcriptional activity and enhances its proteasomal degradation. Phosphorylates JUND and this phosphorylation is inhibited in the presence of MEN1. In neurons, phosphorylates SYT4 which captures neuronal dense core vesicles at synapses. Phosphorylates EIF4ENIF1/4-ET in response to oxidative stress, promoting P-body assembly. Phosphorylates SIRT6 in response to oxidative stress, stimulating its mono-ADP-ribosyltransferase activity. Phosphorylates NLRP3, promoting assembly of the NLRP3 inflammasome. Phosphorylates ALKBH5 in response to reactive oxygen species (ROS), promoting ALKBH5 sumoylation and inactivation. This chain is Mitogen-activated protein kinase 8 (Mapk8), found in Rattus norvegicus (Rat).